We begin with the raw amino-acid sequence, 291 residues long: 4-diphosphocytidyl-2-C-methyl-D-erythritol kinase (291 aa).

Residue Lys10 is part of the active site. 94 to 104 lines the ATP pocket; the sequence is PVSAGLAGGSS. Asp136 is a catalytic residue.

It belongs to the GHMP kinase family. IspE subfamily.

It catalyses the reaction 4-CDP-2-C-methyl-D-erythritol + ATP = 4-CDP-2-C-methyl-D-erythritol 2-phosphate + ADP + H(+). Its pathway is isoprenoid biosynthesis; isopentenyl diphosphate biosynthesis via DXP pathway; isopentenyl diphosphate from 1-deoxy-D-xylulose 5-phosphate: step 3/6. Functionally, catalyzes the phosphorylation of the position 2 hydroxy group of 4-diphosphocytidyl-2C-methyl-D-erythritol. This is 4-diphosphocytidyl-2-C-methyl-D-erythritol kinase from Listeria innocua serovar 6a (strain ATCC BAA-680 / CLIP 11262).